A 327-amino-acid chain; its full sequence is 7,8-didemethyl-8-hydroxy-5-deazariboflavin synthase (327 aa).

Positions 6–244 (ITFSRNVFLP…EEVAVQVAPN (239 aa)) constitute a Radical SAM core domain. Positions 20, 24, and 27 each coordinate [4Fe-4S] cluster.

It belongs to the radical SAM superfamily. CofG family. In terms of assembly, consists of two subunits, CofG and CofH. Requires [4Fe-4S] cluster as cofactor.

It catalyses the reaction 5-amino-5-(4-hydroxybenzyl)-6-(D-ribitylimino)-5,6-dihydrouracil + S-adenosyl-L-methionine = 7,8-didemethyl-8-hydroxy-5-deazariboflavin + 5'-deoxyadenosine + L-methionine + NH4(+) + H(+). It functions in the pathway cofactor biosynthesis; coenzyme F0 biosynthesis. Its function is as follows. Catalyzes the radical-mediated synthesis of 7,8-didemethyl-8-hydroxy-5-deazariboflavin from 5-amino-5-(4-hydroxybenzyl)-6-(D-ribitylimino)-5,6-dihydrouracil. This chain is 7,8-didemethyl-8-hydroxy-5-deazariboflavin synthase, found in Methanosphaerula palustris (strain ATCC BAA-1556 / DSM 19958 / E1-9c).